The following is a 543-amino-acid chain: Mannuronan C5-epimerase (543 aa).

A signal peptide spans 1–35 (MPDISLSIPRRRLPRLRPLAAAVLGAVLLHGQAWA). PbH1 repeat units lie at residues 243–270 (GAEV…SISQ), 283–304 (RPKG…YCYE), 305–327 (ADDL…DPHD), 329–352 (SHRL…IVSR), 354–376 (VNDS…VLDR), 378–400 (SEGN…TLYE), and 401–423 (SGDN…RVRN). The active-site Proton acceptor is the His326.

It belongs to the D-mannuronate C5-epimerase family.

The protein localises to the periplasm. It catalyses the reaction [(1-&gt;4)-beta-D-mannuronosyl](n) = [alginate](n). It participates in glycan biosynthesis; alginate biosynthesis. With respect to regulation, inhibited by the presence of acetyl groups on the substrate. Catalyzes the epimerization of beta-D-mannuronate to alpha-L-guluronate during the synthesis of the linear polysaccharide alginate. In addition, is part of a periplasmic protein complex that protects alginate from degradation by AlgL by channeling the newly formed alginate polymer through a scaffold that transfers the alginate polymer through the periplasmic space to the outer membrane secretin AlgE. The chain is Mannuronan C5-epimerase from Pseudomonas aeruginosa (strain ATCC 15692 / DSM 22644 / CIP 104116 / JCM 14847 / LMG 12228 / 1C / PRS 101 / PAO1).